Consider the following 442-residue polypeptide: Dihydrolipoyllysine-residue acetyltransferase component of pyruvate dehydrogenase complex (442 aa).

A Lipoyl-binding domain is found at 2 to 77; sequence AFEFKLPDIG…TVGQTIITFD (76 aa). Lysine 43 is modified (N6-lipoyllysine). The span at 84-97 shows a compositional bias: basic and acidic residues; that stretch reads LQFKGSDESDDAKT. The tract at residues 84–136 is disordered; sequence LQFKGSDESDDAKTEAQVQSTAEAGQDVAKEEQAQEPAKATGAGQQDQAEVDP. The Peripheral subunit-binding (PSBD) domain maps to 141–178; it reads IAMPSVRKYAREKGVDIRKVTGSGNNGRVVKEDIDSFV. Over residues 182-208 the composition is skewed to low complexity; sequence AQEAAPQETAAPQETAAKPAAAPAPEG. The interval 182 to 215 is disordered; the sequence is AQEAAPQETAAPQETAAKPAAAPAPEGEFPETRE. Residue histidine 413 is part of the active site.

It belongs to the 2-oxoacid dehydrogenase family. In terms of assembly, forms a 24-polypeptide structural core with octahedral symmetry. The cofactor is (R)-lipoate.

The enzyme catalyses N(6)-[(R)-dihydrolipoyl]-L-lysyl-[protein] + acetyl-CoA = N(6)-[(R)-S(8)-acetyldihydrolipoyl]-L-lysyl-[protein] + CoA. In terms of biological role, the pyruvate dehydrogenase complex catalyzes the overall conversion of pyruvate to acetyl-CoA and CO(2). It contains multiple copies of three enzymatic components: pyruvate dehydrogenase (E1), dihydrolipoamide acetyltransferase (E2) and lipoamide dehydrogenase (E3). Functionally, the B.subtilis PDH complex also possesses branched-chain 2-oxoacid dehydrogenase (BCDH) activity. The sequence is that of Dihydrolipoyllysine-residue acetyltransferase component of pyruvate dehydrogenase complex (pdhC) from Bacillus subtilis (strain 168).